We begin with the raw amino-acid sequence, 1858 residues long: Inactive histone-lysine N-methyltransferase 2E (1858 aa).

An HCFC1-binding motif (HBM) motif is present at residues 63–66 (DHNY). The PHD-type zinc-finger motif lies at 118 to 166 (VTRCICGFTHDDGYMICCDKCSVWQHIDCMGIDRQHIPDTYLCERCQPR). Zn(2+) is bound by residues cysteine 121, cysteine 123, cysteine 135, cysteine 138, histidine 143, cysteine 146, cysteine 160, and cysteine 163. Positions 217–269 (ASRVSKVNDKRRKKSGEKEQHISKCKKAFREGSRKSSRVKGSAPEIDPSSDGS) are disordered. Over residues 232–250 (GEKEQHISKCKKAFREGSR) the composition is skewed to basic and acidic residues. An SET domain is found at 330-447 (PPVESHIQKN…KGTEITIAFD (118 aa)). Serine 435 is a glycosylation site (O-linked (GlcNAc) serine). Threonine 440 is a glycosylation site (O-linked (GlcNAc) threonine). Residues 475–530 (SESMENINSGYETRRKKGKKDKDISKEKDTQNQNITLDCEGTTNKMKSPETKQRKL) form a disordered region. Residues 494–504 (KDKDISKEKDT) show a composition bias toward basic and acidic residues. Over residues 505–520 (QNQNITLDCEGTTNKM) the composition is skewed to polar residues. Residues 559-615 (VEMESEEQIAERKRKMTREERKMEAILQAFARLEKREKRREQALERISTAKTEVKTE) are a coiled coil. Serine 623 is subject to Phosphoserine. The interval 630 to 687 (EQAKEENASKPTPAKVNRTKQRKSFSRSRTHIGQQRRRHRTVSMCSDIQPSSPDIEVT) is disordered. Residues 646 to 670 (NRTKQRKSFSRSRTHIGQQRRRHRT) show a composition bias toward basic residues. Over residues 672 to 687 (SMCSDIQPSSPDIEVT) the composition is skewed to polar residues. 2 positions are modified to phosphoserine: serine 837 and serine 845. Composition is skewed to low complexity over residues 887 to 901 (TSTP…PTHT) and 933 to 957 (PVTP…PESS). Disordered regions lie at residues 887 to 960 (TSTP…SPEI) and 1039 to 1068 (LETP…SSWV). Basic and acidic residues predominate over residues 1039 to 1048 (LETPAHDRAE). Over residues 1049-1068 (PNSQLDSTHSGRGTMYSSWV) the composition is skewed to polar residues. Position 1070 is a phosphoserine (serine 1070). Disordered stretches follow at residues 1164 to 1561 (KRQR…QNQQ) and 1581 to 1835 (VFTS…PVPG). Composition is skewed to polar residues over residues 1186–1206 (PHAS…NDNG) and 1222–1235 (TVYN…SNNC). A Phosphoserine modification is found at serine 1273. The span at 1273–1282 (SDHRKDKDSG) shows a compositional bias: basic and acidic residues. 2 stretches are compositionally biased toward low complexity: residues 1285-1303 (SPCV…SSHS) and 1349-1362 (KSPP…SPGS). At serine 1359 the chain carries Phosphoserine. 2 stretches are compositionally biased toward polar residues: residues 1400-1432 (QQKQ…SQKL) and 1506-1542 (LPAN…LNST). Over residues 1543-1553 (APPPPPPPPPS) the composition is skewed to pro residues. A compositionally biased stretch (polar residues) spans 1581–1599 (VFTSGPNQALPGTTSQQTV). Over residues 1626 to 1637 (VPPPPPPPPAPG) the composition is skewed to pro residues. Positions 1642-1651 (QQPNSHQQHS) are enriched in polar residues. Residues 1677-1687 (LPPPPPPPGPA) are compositionally biased toward pro residues. The span at 1698 to 1711 (TGLQGLQAQHQHVV) shows a compositional bias: polar residues. Pro residues predominate over residues 1714-1724 (APPPPPPPPPS). Over residues 1798–1808 (QGPNSIPTPTA) the composition is skewed to polar residues.

It belongs to the class V-like SAM-binding methyltransferase superfamily. Histone-lysine methyltransferase family. TRX/MLL subfamily. As to quaternary structure, component of a complex composed of KMT2E (isoform 3), OGT and USP7; the complex stabilizes KMT2E, preventing KMT2E ubiquitination and proteasomal-mediated degradation. Isoform 3 interacts (via N-terminus) with OGT (via TRP repeats). Isoform 3 interacts with deubiquitinating enzyme USP7 (via MATH domain). Isoform 3 interacts (via HBM motif) with HCFC1 (via Kelch domain). Isoform 3 interacts with E2F1; the interaction is probably indirect and is mediated via HCFC1. Ubiquitinated. Deubiquitinated by USP7. Post-translationally, O-glycosylated at Ser-435 and Thr-440 in the SET domain by OGT which probably prevents KMT2E proteasomal-mediated degradation. Widely expressed in both adult and fetal tissues. Highest levels of expression observed in fetal thymus and kidney and in adult hematopoietic tissues, jejunum and cerebellum. Isoform NKp44L: Not detected on circulating cells from healthy individuals, but is expressed on a large panel of tumor and transformed cells.

Its subcellular location is the chromosome. It is found in the cytoplasm. The protein resides in the cytoskeleton. The protein localises to the microtubule organizing center. It localises to the centrosome. Its subcellular location is the nucleus speckle. It is found in the nucleus. The protein resides in the nucleoplasm. The protein localises to the cell membrane. Associates with chromatin regions downstream of transcriptional start sites of active genes and thus regulates gene transcription. Chromatin interaction is mediated via the binding to tri-methylated histone H3 at 'Lys-4' (H3K4me3). Key regulator of hematopoiesis involved in terminal myeloid differentiation and in the regulation of hematopoietic stem cell (HSCs) self-renewal by a mechanism that involves DNA methylation. Also acts as an important cell cycle regulator, participating in cell cycle regulatory network machinery at multiple cell cycle stages including G1/S transition, S phase progression and mitotic entry. Recruited to E2F1 responsive promoters by HCFC1 where it stimulates tri-methylation of histone H3 at 'Lys-4' and transcriptional activation and thereby facilitates G1 to S phase transition. During myoblast differentiation, required to suppress inappropriate expression of S-phase-promoting genes and maintain expression of determination genes in quiescent cells. Functionally, cellular ligand for NCR2/NKp44, may play a role as a danger signal in cytotoxicity and NK-cell-mediated innate immunity. This is Inactive histone-lysine N-methyltransferase 2E (KMT2E) from Homo sapiens (Human).